Consider the following 221-residue polypeptide: Endo-1,4-beta-xylanase 11A (221 aa).

The N-terminal stretch at 1-18 is a signal peptide; it reads MKFATVLAFATAAGAAFA. The GH11 domain occupies 23–220; it reads SSETTEAGQL…GTGSASMSVS (198 aa). The Nucleophile role is filled by E111. N117 is a glycosylation site (N-linked (GlcNAc...) asparagine). E207 acts as the Proton donor in catalysis.

Belongs to the glycosyl hydrolase 11 (cellulase G) family.

It is found in the secreted. The catalysed reaction is Endohydrolysis of (1-&gt;4)-beta-D-xylosidic linkages in xylans.. Its pathway is glycan degradation; xylan degradation. Endo-1,4-beta-xylanase involved in the hydrolysis of xylan, a major structural heterogeneous polysaccharide found in plant biomass representing the second most abundant polysaccharide in the biosphere, after cellulose. This chain is Endo-1,4-beta-xylanase 11A (XYN11A), found in Mycosarcoma maydis (Corn smut fungus).